We begin with the raw amino-acid sequence, 219 residues long: DnaJ homolog subfamily C member 30, mitochondrial (219 aa).

A mitochondrion-targeting transit peptide spans M1–Y38. Residues A42–L107 enclose the J domain. The segment at S109–P148 is disordered. Over residues D127–P138 the composition is skewed to pro residues. The chain crosses the membrane as a helical span at residues A202–R218.

Associates with the ATP synthase complex. Interacts with MT-ATP6; interaction is direct. Interacts with ATP5MC2; interaction is direct. In brain, expressed in gray matter structures.

It localises to the mitochondrion inner membrane. Its function is as follows. Mitochondrial protein enriched in neurons that acts as a regulator of mitochondrial respiration. Associates with the ATP synthase complex and facilitates ATP synthesis. May be a chaperone protein involved in the turnover of the subunits of mitochondrial complex I N-module. It facilitates the degradation of N-module subunits damaged by oxidative stress, and contributes to complex I functional efficiency. The chain is DnaJ homolog subfamily C member 30, mitochondrial from Mus musculus (Mouse).